A 1449-amino-acid chain; its full sequence is VWFA and cache domain-containing protein CG16868 (1449 aa).

Residues methionine 1–serine 23 form the signal peptide. The Extracellular segment spans residues glutamine 24 to serine 1220. 6 N-linked (GlcNAc...) asparagine glycosylation sites follow: asparagine 32, asparagine 112, asparagine 153, asparagine 407, asparagine 447, and asparagine 497. The VWFA domain occupies phenylalanine 320–isoleucine 541. One can recognise a Cache 1 domain in the interval valine 557–serine 639. 3 N-linked (GlcNAc...) asparagine glycosylation sites follow: asparagine 649, asparagine 668, and asparagine 707. The Cache 2 domain occupies threonine 889–tyrosine 934. Asparagine 1015, asparagine 1025, asparagine 1059, and asparagine 1111 each carry an N-linked (GlcNAc...) asparagine glycan. The chain crosses the membrane as a helical span at residues alanine 1221 to tyrosine 1241. Over cysteine 1242 to serine 1449 the chain is Cytoplasmic. 2 disordered regions span residues tyrosine 1307 to glutamine 1339 and aspartate 1352 to valine 1416. The span at aspartate 1359 to serine 1369 shows a compositional bias: low complexity. Polar residues predominate over residues proline 1370–serine 1392.

The protein belongs to the calcium channel subunit alpha-2/delta family.

The protein resides in the membrane. The chain is VWFA and cache domain-containing protein CG16868 from Drosophila melanogaster (Fruit fly).